A 296-amino-acid polypeptide reads, in one-letter code: Carboxylesterase YbfK (296 aa).

Active-site charge relay system residues include serine 129, glutamate 244, and histidine 273.

Belongs to the AB hydrolase superfamily.

It localises to the cytoplasm. It carries out the reaction a carboxylic ester + H2O = an alcohol + a carboxylate + H(+). In terms of biological role, shows carboxylesterase activity in vitro. The protein is Carboxylesterase YbfK (ybfK) of Bacillus subtilis (strain 168).